Here is a 319-residue protein sequence, read N- to C-terminus: ATP-dependent 6-phosphofructokinase (319 aa).

Glycine 11 contacts ATP. 21–25 (RAVAR) is a binding site for ADP. ATP is bound by residues 72–73 (RY) and 102–105 (GDGS). Mg(2+) is bound at residue aspartate 103. Residue 125–127 (TID) coordinates substrate. Catalysis depends on aspartate 127, which acts as the Proton acceptor. ADP is bound at residue arginine 154. Substrate contacts are provided by residues arginine 162 and 169–171 (MGR). Residues 185 to 187 (GAE) and arginine 211 contribute to the ADP site. Residues glutamate 222, arginine 243, and 249–252 (HIVR) contribute to the substrate site.

Belongs to the phosphofructokinase type A (PFKA) family. ATP-dependent PFK group I subfamily. Prokaryotic clade 'B1' sub-subfamily. In terms of assembly, homotetramer. Mg(2+) is required as a cofactor.

It localises to the cytoplasm. The catalysed reaction is beta-D-fructose 6-phosphate + ATP = beta-D-fructose 1,6-bisphosphate + ADP + H(+). Its pathway is carbohydrate degradation; glycolysis; D-glyceraldehyde 3-phosphate and glycerone phosphate from D-glucose: step 3/4. Its activity is regulated as follows. Allosterically activated by ADP and other diphosphonucleosides, and allosterically inhibited by phosphoenolpyruvate. Its function is as follows. Catalyzes the phosphorylation of D-fructose 6-phosphate to fructose 1,6-bisphosphate by ATP, the first committing step of glycolysis. The protein is ATP-dependent 6-phosphofructokinase of Lacticaseibacillus casei (strain BL23) (Lactobacillus casei).